Here is a 706-residue protein sequence, read N- to C-terminus: Phosphatase and actin regulator 4 (706 aa).

The RPEL 1 repeat unit spans residues 42 to 67 (EVLERKISMRKPREELVKRGLLVEVP). Disordered regions lie at residues 65–123 (EVPE…QPCA), 196–380 (VHPR…HIPV), 385–404 (VPML…QSAS), and 459–579 (LKVP…REEW). Positions 106–121 (DSTGSRPKSGETTVQP) are enriched in polar residues. A compositionally biased stretch (basic and acidic residues) spans 200–211 (HLSEKNSEKYRP). Residues 266-276 (DPSTRQQSSVP) show a composition bias toward polar residues. The span at 290–299 (KQPPVPPPKP) shows a compositional bias: pro residues. Acidic residues-rich tracts occupy residues 463-476 (DDDD…DESL), 508-523 (QEEE…DTDS), and 531-541 (EDDEEEEEEET). Over residues 563-579 (GPHDSNPEFPQRSREEW) the composition is skewed to basic and acidic residues. RPEL repeat units follow at residues 588–613 (SQLN…QKNE) and 625–650 (RRLT…RFNE).

It belongs to the phosphatase and actin regulator family. Binds ppp1ca and actin.

It is found in the cytoplasm. The protein resides in the cell projection. Its subcellular location is the lamellipodium. Functionally, regulator of protein phosphatase 1 (PP1) required for neural tube and optic fissure closure, and enteric neural crest cell (ENCCs) migration during development. Acts as an activator of PP1. During neural tube closure, localizes to the ventral neural tube and activates PP1, leading to down-regulate cell proliferation within cranial neural tissue and the neural retina. Also acts as a regulator of migration of enteric neural crest cells (ENCCs) by activating PP1, leading to repression of the integrin signaling through the rho/rock pathway. This chain is Phosphatase and actin regulator 4 (phactr4), found in Xenopus tropicalis (Western clawed frog).